The sequence spans 1726 residues: Transcription elongation factor SPT6 (1726 aa).

Composition is skewed to acidic residues over residues 1-18 (MSDF…EFEE), 31-45 (EEDE…EDQD), and 55-79 (DDDD…SDSG). 3 disordered regions span residues 1–196 (MSDF…KGKK), 219–248 (AEFD…KKQT), and 482–512 (EVSE…QASR). Ser-90 is modified (phosphoserine). Residues 93-104 (DYLDDDDLDLIE) show a composition bias toward acidic residues. Basic residues predominate over residues 110-120 (KVKRRKKKYSR). Acidic residues-rich tracts occupy residues 146-157 (GDGEGEVEDGEA), 166-186 (DEEE…DDDG), 219-240 (AEFD…DDES), and 484-501 (SEED…EEEE). Basic and acidic residues predominate over residues 502 to 512 (QKGPDLKQASR). Residues 806–865 (LKRRNAWREDEREKKQQDVENLKKFLLSKKPHVVAVSGENRDAHMVMEDIKRTISELEQN) adopt a coiled-coil conformation. The S1 motif domain maps to 1204 to 1273 (WNHFDSGSCP…EKFNVDLTCR (70 aa)). In terms of domain architecture, SH2 spans 1316–1426 (YIKRVIAHPS…LLGHKYFHEC (111 aa)). Residue Thr-1522 is modified to Phosphothreonine. The residue at position 1525 (Ser-1525) is a Phosphoserine. The span at 1611–1627 (LMTPSYSYTTPGQQQAM) shows a compositional bias: polar residues. Residues 1611–1726 (LMTPSYSYTT…ATPLLDEMDR (116 aa)) form a disordered region. Composition is skewed to low complexity over residues 1628-1640 (TTPQ…PQSS) and 1647-1656 (SSSTPSSSSS). Residues 1657 to 1669 (RVRTPQPKASSHT) show a composition bias toward polar residues.

Belongs to the SPT6 family.

It is found in the nucleus. Its function is as follows. Histone H3-H4 chaperone that plays a role in maintenance of chromatin structure during RNA polymerase II transcription elongation. Promotes the activation of the myogenic gene program by entailing erasure of the repressive H3K27me3 epigenetic mark through stabilization of the chromatin interaction of the H3K27 demethylase KDM6A. Plays an important role during early patterning and somitogenesis of the embryo. This is Transcription elongation factor SPT6 (supt6h) from Danio rerio (Zebrafish).